The chain runs to 138 residues: Small ribosomal subunit protein uS9 (138 aa).

Residues 99–138 (DPDNRPPLKTEGYLTRDPRAKERKKYGLHKARKAPQYSKR) form a disordered region. Residues 100–118 (PDNRPPLKTEGYLTRDPRA) are compositionally biased toward basic and acidic residues. Residues 119 to 138 (KERKKYGLHKARKAPQYSKR) are compositionally biased toward basic residues.

The protein belongs to the universal ribosomal protein uS9 family.

In Nostoc punctiforme (strain ATCC 29133 / PCC 73102), this protein is Small ribosomal subunit protein uS9.